Reading from the N-terminus, the 421-residue chain is ATP-dependent RNA helicase RhlB (421 aa).

The Q motif signature appears at 9-37; sequence QKFSDFALHPKVVEVLEKKGFHNCTPIQA. The region spanning 40–219 is the Helicase ATP-binding domain; it reads LPLTLAGRDV…FEQMNNAEYI (180 aa). 53 to 60 serves as a coordination point for ATP; that stretch reads AQTGTGKT. Positions 165 to 168 match the DEAD box motif; it reads DEAD. The Helicase C-terminal domain occupies 245–390; that stretch reads RLLQTLIEEE…VSKYNPDALM (146 aa). Residues 392-421 are disordered; it reads DLPKPLRLTRPRTGNGPRRTGAPRNRRRSG. Residues 402 to 414 show a composition bias toward low complexity; that stretch reads PRTGNGPRRTGAP.

Belongs to the DEAD box helicase family. RhlB subfamily. As to quaternary structure, component of the RNA degradosome, which is a multiprotein complex involved in RNA processing and mRNA degradation.

The protein localises to the cytoplasm. It catalyses the reaction ATP + H2O = ADP + phosphate + H(+). Its function is as follows. DEAD-box RNA helicase involved in RNA degradation. Has RNA-dependent ATPase activity and unwinds double-stranded RNA. This is ATP-dependent RNA helicase RhlB from Shigella boydii serotype 18 (strain CDC 3083-94 / BS512).